The sequence spans 184 residues: Oligoribonuclease (184 aa).

Residues L8–L171 enclose the Exonuclease domain. Y129 is a catalytic residue.

Belongs to the oligoribonuclease family.

Its subcellular location is the cytoplasm. Functionally, 3'-to-5' exoribonuclease specific for small oligoribonucleotides. The chain is Oligoribonuclease from Buchnera aphidicola subsp. Acyrthosiphon pisum (strain APS) (Acyrthosiphon pisum symbiotic bacterium).